The chain runs to 646 residues: Choline transporter-like protein 1 (646 aa).

Over 1–27 the chain is Cytoplasmic; the sequence is MGCCGCGSEEGSVRQWKPLEQRSCTDV. The helical transmembrane segment at 28-48 threads the bilayer; sequence LWLLIFVLFCIGMAIICGFAI. At 49–207 the chain is on the extracellular side; sequence ASGAAQRLVF…RVITGVMTSK (159 aa). Asparagine 133 carries an N-linked (GlcNAc...) asparagine glycan. A helical membrane pass occupies residues 208–228; the sequence is EIIVGLCLMSLVLSILLMVII. Residues 229 to 233 are Cytoplasmic-facing; the sequence is RYISK. The helical transmembrane segment at 234 to 254 threads the bilayer; sequence VLVWILAILTIIGSIGGTAVL. At 255 to 281 the chain is on the extracellular side; sequence WWLYADHKKTLKLDPSQGDVAADNVTA. Residue asparagine 278 is glycosylated (N-linked (GlcNAc...) asparagine). Residues 282 to 302 form a helical membrane-spanning segment; it reads LLVCAIIATVITVILLLLMLI. Residues 303 to 308 lie on the Cytoplasmic side of the membrane; sequence MRKRVA. A helical transmembrane segment spans residues 309–329; it reads LTIALFHVAGKVFIHIPFLIF. Residues 330–331 lie on the Extracellular side of the membrane; it reads QS. Residues 332–352 traverse the membrane as a helical segment; that stretch reads LWTFLALAFFWIYWIAVLLLL. Over 353-373 the chain is Cytoplasmic; the sequence is ATAGYPQKKDQGYVEFKVSGP. Residues 374-394 form a helical membrane-spanning segment; that stretch reads LQYTWIYHLVGLIWISEFILA. The Extracellular segment spans residues 395 to 435; it reads CQQMTIAGAVVTYYFTRDKHNLPATPILASMCRLIKYHLGT. A helical membrane pass occupies residues 436 to 456; sequence VAKGSFIITLIKIPQMILVYI. The Cytoplasmic portion of the chain corresponds to 457-530; the sequence is HSQLKGKENA…RVAAINTVGD (74 aa). A helical transmembrane segment spans residues 531 to 551; it reads FVLFLGKLLIVLVTGFVGIIL. The Extracellular portion of the chain corresponds to 552–559; that stretch reads LNYQRDYT. The helical transmembrane segment at 560–580 threads the bilayer; that stretch reads VWVLPLIIICLFAFFVSHCFL. The Cytoplasmic portion of the chain corresponds to 581 to 646; it reads SIYEMVVDVL…KSMASGSDNA (66 aa).

This sequence belongs to the CTL (choline transporter-like) family. In terms of tissue distribution, present in myelinated structures from brain and spinal cord (at protein level).

Its subcellular location is the cell membrane. The protein resides in the mitochondrion outer membrane. It carries out the reaction choline(out) + n H(+)(in) = choline(in) + n H(+)(out). It catalyses the reaction ethanolamine(out) + n H(+)(in) = ethanolamine(in) + n H(+)(out). Functionally, probable choline transporter. May be involved in membrane synthesis and myelin production. The protein is Choline transporter-like protein 1 (slc44a1) of Torpedo marmorata (Marbled electric ray).